The sequence spans 267 residues: Probable beta-lactamase YbxI (267 aa).

The signal sequence occupies residues 1 to 23 (MKKWIYVVLVLSIAGIGGFSVHA). The active-site Acyl-ester intermediate is serine 76. An N6-carboxylysine modification is found at lysine 79. Residue 214–216 (KTG) coordinates substrate.

This sequence belongs to the class-D beta-lactamase family.

The enzyme catalyses a beta-lactam + H2O = a substituted beta-amino acid. This chain is Probable beta-lactamase YbxI (ybxI), found in Bacillus subtilis (strain 168).